The following is a 137-amino-acid chain: uncharacterized protein (137 aa).

Over residues 1 to 10 (MISVDVPGHP) the composition is skewed to low complexity. The disordered stretch occupies residues 1–23 (MISVDVPGHPGDAGGGGGGARKV). Positions 11 to 20 (GDAGGGGGGA) are enriched in gly residues.

This is an uncharacterized protein from Human adenovirus C serotype 2 (HAdV-2).